We begin with the raw amino-acid sequence, 142 residues long: ATP synthase F(0) complex subunit C3, mitochondrial (142 aa).

The transit peptide at methionine 1–arginine 67 directs the protein to the mitochondrion. A helical membrane pass occupies residues valine 83–tyrosine 103. N6,N6,N6-trimethyllysine is present on lysine 110. Residues isoleucine 118–isoleucine 138 traverse the membrane as a helical segment.

Belongs to the ATPase C chain family. In terms of assembly, F-type ATPases have 2 components, CF(1) - the catalytic core - and CF(0) - the membrane proton channel. CF(1) has five subunits: alpha(3), beta(3), gamma(1), delta(1), epsilon(1). CF(0) has three main subunits: a, b and c. Interacts with TMEM70 and TMEM242. Trimethylated by ATPSCKMT at Lys-110. Methylation is required for proper incorporation of the C subunit into the ATP synthase complex and mitochondrial respiration.

Its subcellular location is the mitochondrion membrane. Mitochondrial membrane ATP synthase (F(1)F(0) ATP synthase or Complex V) produces ATP from ADP in the presence of a proton gradient across the membrane which is generated by electron transport complexes of the respiratory chain. F-type ATPases consist of two structural domains, F(1) - containing the extramembraneous catalytic core and F(0) - containing the membrane proton channel, linked together by a central stalk and a peripheral stalk. During catalysis, ATP synthesis in the catalytic domain of F(1) is coupled via a rotary mechanism of the central stalk subunits to proton translocation. Part of the complex F(0) domain. A homomeric c-ring of probably 10 subunits is part of the complex rotary element. This Pongo abelii (Sumatran orangutan) protein is ATP synthase F(0) complex subunit C3, mitochondrial.